The primary structure comprises 189 residues: Protein Flattop (189 aa).

The interval 112–189 (EISGKPFDPD…PPPSPCKSTK (78 aa)) is disordered. Over residues 137–148 (APNPTIIPSSPV) the composition is skewed to polar residues. The span at 178 to 189 (NNPPPSPCKSTK) shows a compositional bias: pro residues.

Belongs to the Flattop family. In terms of assembly, microtubule inner protein component of sperm flagellar doublet microtubules. Interacts with DLG3. As to expression, expressed in mono- and multiciliated tissues during planar cell polarity acquisition.

Its subcellular location is the cytoplasm. It is found in the cytoskeleton. The protein resides in the cilium basal body. The protein localises to the cilium axoneme. It localises to the flagellum axoneme. Its subcellular location is the apical cell membrane. Its function is as follows. Microtubule inner protein (MIP) part of the dynein-decorated doublet microtubules (DMTs) in cilia axoneme. Acts as a regulator of cilium basal body docking and positioning in mono- and multiciliated cells. Regulates basal body docking and cilia formation in multiciliated lung cells. Regulates kinocilium positioning and stereocilia bundle morphogenesis in the inner ear. This Mus musculus (Mouse) protein is Protein Flattop.